A 285-amino-acid chain; its full sequence is Urease accessory protein UreD (285 aa).

It belongs to the UreD family. UreD, UreF and UreG form a complex that acts as a GTP-hydrolysis-dependent molecular chaperone, activating the urease apoprotein by helping to assemble the nickel containing metallocenter of UreC. The UreE protein probably delivers the nickel.

It is found in the cytoplasm. Its function is as follows. Required for maturation of urease via the functional incorporation of the urease nickel metallocenter. This is Urease accessory protein UreD from Citrobacter koseri (strain ATCC BAA-895 / CDC 4225-83 / SGSC4696).